A 129-amino-acid polypeptide reads, in one-letter code: uncharacterized protein (129 aa).

An N-terminal signal peptide occupies residues 1–20 (MIYPLFRICILGAFLLGSYA).

This is an uncharacterized protein from Saccharomyces cerevisiae (strain ATCC 204508 / S288c) (Baker's yeast).